Here is a 143-residue protein sequence, read N- to C-terminus: Large ribosomal subunit protein uL13 (143 aa).

The protein belongs to the universal ribosomal protein uL13 family. As to quaternary structure, part of the 50S ribosomal subunit.

In terms of biological role, this protein is one of the early assembly proteins of the 50S ribosomal subunit, although it is not seen to bind rRNA by itself. It is important during the early stages of 50S assembly. The polypeptide is Large ribosomal subunit protein uL13 (Desulfitobacterium hafniense (strain DSM 10664 / DCB-2)).